A 1162-amino-acid chain; its full sequence is Carbamoyl phosphate synthase large chain (1162 aa).

The interval 1–456 is carboxyphosphate synthetic domain; that stretch reads MPKRTDIKSI…SLQKALRGLE (456 aa). Residues arginine 129, arginine 222, glycine 228, glycine 229, glutamate 261, valine 263, glutamate 268, glycine 294, valine 295, histidine 296, glutamine 338, and glutamate 352 each coordinate ATP. The 196-residue stretch at 186-381 folds into the ATP-grasp 1 domain; that stretch reads ETEWQLGEVE…IAKVAAKLAV (196 aa). Residues glutamine 338, glutamate 352, and asparagine 354 each coordinate Mg(2+). Mn(2+) is bound by residues glutamine 338, glutamate 352, and asparagine 354. The segment at 457–613 is oligomerization domain; it reads TGLTGFDEIA…PFVGQPRSEA (157 aa). Positions 614-1025 are carbamoyl phosphate synthetic domain; it reads EVSDRKKVVI…AFAKAQLGAG (412 aa). Residues 742 to 954 enclose the ATP-grasp 2 domain; that stretch reads QKLLIKLDLN…IAKVAARIMA (213 aa). ATP-binding residues include arginine 778, threonine 838, leucine 840, glutamate 845, glycine 870, isoleucine 871, histidine 872, serine 873, glutamine 913, and glutamate 925. Mg(2+)-binding residues include glutamine 913, glutamate 925, and asparagine 927. Residues glutamine 913, glutamate 925, and asparagine 927 each contribute to the Mn(2+) site. In terms of domain architecture, MGS-like spans 1026-1162; sequence VELPREGTVF…VRPLQDYFRS (137 aa). The interval 1026–1162 is allosteric domain; the sequence is VELPREGTVF…VRPLQDYFRS (137 aa).

Belongs to the CarB family. In terms of assembly, composed of two chains; the small (or glutamine) chain promotes the hydrolysis of glutamine to ammonia, which is used by the large (or ammonia) chain to synthesize carbamoyl phosphate. Tetramer of heterodimers (alpha,beta)4. Requires Mg(2+) as cofactor. The cofactor is Mn(2+).

It carries out the reaction hydrogencarbonate + L-glutamine + 2 ATP + H2O = carbamoyl phosphate + L-glutamate + 2 ADP + phosphate + 2 H(+). The catalysed reaction is hydrogencarbonate + NH4(+) + 2 ATP = carbamoyl phosphate + 2 ADP + phosphate + 2 H(+). It functions in the pathway amino-acid biosynthesis; L-arginine biosynthesis; carbamoyl phosphate from bicarbonate: step 1/1. Its pathway is pyrimidine metabolism; UMP biosynthesis via de novo pathway; (S)-dihydroorotate from bicarbonate: step 1/3. Its function is as follows. Large subunit of the glutamine-dependent carbamoyl phosphate synthetase (CPSase). CPSase catalyzes the formation of carbamoyl phosphate from the ammonia moiety of glutamine, carbonate, and phosphate donated by ATP, constituting the first step of 2 biosynthetic pathways, one leading to arginine and/or urea and the other to pyrimidine nucleotides. The large subunit (synthetase) binds the substrates ammonia (free or transferred from glutamine from the small subunit), hydrogencarbonate and ATP and carries out an ATP-coupled ligase reaction, activating hydrogencarbonate by forming carboxy phosphate which reacts with ammonia to form carbamoyl phosphate. The polypeptide is Carbamoyl phosphate synthase large chain (Brucella melitensis biotype 1 (strain ATCC 23456 / CCUG 17765 / NCTC 10094 / 16M)).